The primary structure comprises 331 residues: Type 2 lactosamine alpha-2,3-sialyltransferase (331 aa).

Over M1–Y4 the chain is Cytoplasmic. Residues L5 to G25 form a helical; Signal-anchor for type II membrane protein membrane-spanning segment. Residues T26–D331 lie on the Lumenal side of the membrane. N-linked (GlcNAc...) asparagine glycosylation is found at N129, N181, N282, N295, N308, and N327.

Belongs to the glycosyltransferase 29 family.

It localises to the golgi apparatus membrane. The enzyme catalyses a neolactoside nLc4Cer(d18:1(4E)) + CMP-N-acetyl-beta-neuraminate = a neolactoside IV(3)-alpha-NeuAc-nLc4Cer(d18:1(4E)) + CMP + H(+). It catalyses the reaction a beta-D-galactosyl-(1-&gt;4)-N-acetyl-beta-D-glucosaminyl derivative + CMP-N-acetyl-beta-neuraminate = an N-acetyl-alpha-neuraminyl-(2-&gt;3)-beta-D-galactosyl-(1-&gt;4)-N-acetyl-beta-D-glucosaminyl derivative + CMP + H(+). The catalysed reaction is a neolactoside nLc6Cer(d18:1(4E)) + CMP-N-acetyl-beta-neuraminate = a neolactoside VI(3)-alpha-NeuNAc-nLc6Cer(d18:1(4E)) + CMP + H(+). In terms of biological role, transfers the sialyl residue from CMP-N-acetyl-beta-neuraminate to the terminal galactose residue on sugar chains of glycoproteins and glycolipids. It's alpha-2,3-sialyltransferase activity is specific toward type II glycan chains (Galbeta1-4GlcNAc) on glycoproteins and glycolipids such as neolactosides nLc4Cer and nLc6Cer, whose sialyl-products serve as precursors for the Lewis X antigen. Critically involved in the synthesis of functional selectin ligands needed for neutrophil recruitment during inflammation and lymphocyte homing to the lymph nodes. The protein is Type 2 lactosamine alpha-2,3-sialyltransferase (ST3GAL6) of Pan troglodytes (Chimpanzee).